The following is a 278-amino-acid chain: 4-hydroxy-3-methylbut-2-enyl diphosphate reductase (278 aa).

Cys-12 serves as a coordination point for [4Fe-4S] cluster. 2 residues coordinate (2E)-4-hydroxy-3-methylbut-2-enyl diphosphate: His-40 and His-75. Residues His-40 and His-75 each coordinate dimethylallyl diphosphate. Isopentenyl diphosphate contacts are provided by His-40 and His-75. Residue Cys-97 coordinates [4Fe-4S] cluster. A (2E)-4-hydroxy-3-methylbut-2-enyl diphosphate-binding site is contributed by His-125. His-125 lines the dimethylallyl diphosphate pocket. His-125 is an isopentenyl diphosphate binding site. Glu-127 (proton donor) is an active-site residue. Thr-157 contributes to the (2E)-4-hydroxy-3-methylbut-2-enyl diphosphate binding site. Cys-187 is a [4Fe-4S] cluster binding site. (2E)-4-hydroxy-3-methylbut-2-enyl diphosphate-binding residues include Ser-215, Ser-216, Asn-217, and Ser-258. Positions 215, 216, 217, and 258 each coordinate dimethylallyl diphosphate. The isopentenyl diphosphate site is built by Ser-215, Ser-216, Asn-217, and Ser-258.

It belongs to the IspH family. Requires [4Fe-4S] cluster as cofactor.

It catalyses the reaction isopentenyl diphosphate + 2 oxidized [2Fe-2S]-[ferredoxin] + H2O = (2E)-4-hydroxy-3-methylbut-2-enyl diphosphate + 2 reduced [2Fe-2S]-[ferredoxin] + 2 H(+). The catalysed reaction is dimethylallyl diphosphate + 2 oxidized [2Fe-2S]-[ferredoxin] + H2O = (2E)-4-hydroxy-3-methylbut-2-enyl diphosphate + 2 reduced [2Fe-2S]-[ferredoxin] + 2 H(+). It participates in isoprenoid biosynthesis; dimethylallyl diphosphate biosynthesis; dimethylallyl diphosphate from (2E)-4-hydroxy-3-methylbutenyl diphosphate: step 1/1. The protein operates within isoprenoid biosynthesis; isopentenyl diphosphate biosynthesis via DXP pathway; isopentenyl diphosphate from 1-deoxy-D-xylulose 5-phosphate: step 6/6. Functionally, catalyzes the conversion of 1-hydroxy-2-methyl-2-(E)-butenyl 4-diphosphate (HMBPP) into a mixture of isopentenyl diphosphate (IPP) and dimethylallyl diphosphate (DMAPP). Acts in the terminal step of the DOXP/MEP pathway for isoprenoid precursor biosynthesis. In Pseudothermotoga lettingae (strain ATCC BAA-301 / DSM 14385 / NBRC 107922 / TMO) (Thermotoga lettingae), this protein is 4-hydroxy-3-methylbut-2-enyl diphosphate reductase.